Consider the following 497-residue polypeptide: Probable cytosol aminopeptidase (497 aa).

Residues K263 and D268 each contribute to the Mn(2+) site. The active site involves K275. The Mn(2+) site is built by D286, D345, and E347. Residue R349 is part of the active site.

Belongs to the peptidase M17 family. Requires Mn(2+) as cofactor.

The protein localises to the cytoplasm. It carries out the reaction Release of an N-terminal amino acid, Xaa-|-Yaa-, in which Xaa is preferably Leu, but may be other amino acids including Pro although not Arg or Lys, and Yaa may be Pro. Amino acid amides and methyl esters are also readily hydrolyzed, but rates on arylamides are exceedingly low.. The enzyme catalyses Release of an N-terminal amino acid, preferentially leucine, but not glutamic or aspartic acids.. Presumably involved in the processing and regular turnover of intracellular proteins. Catalyzes the removal of unsubstituted N-terminal amino acids from various peptides. This chain is Probable cytosol aminopeptidase, found in Agrobacterium fabrum (strain C58 / ATCC 33970) (Agrobacterium tumefaciens (strain C58)).